The primary structure comprises 154 residues: MEFFFFIDVYADRELVDYYIVTFKLDDLSSVELTGSQGKYYIRGIRDWEKFKEEAYDITLYELGDEVDRFKDIETALREAYRIAIGEAVRRGAKNIVPAIGFGNPPPEVVERVYPEELKFEKFPEDLDAFLDRIVKEVSLETTERSKDDDEIPF.

This is an uncharacterized protein from Aquifex aeolicus (strain VF5).